We begin with the raw amino-acid sequence, 1523 residues long: Rho GTPase-activating protein gacHH (1523 aa).

3 Kelch repeats span residues 30–76 (DIVI…YGHS), 83–133 (KMFV…LIYD), and 135–184 (YILI…DISP). 2 stretches are compositionally biased toward polar residues: residues 161-173 (NSWT…SSTG) and 184-194 (PRSSTTTPTHQ). The tract at residues 161–256 (NSWTKPSSNS…GGSPMTTPPT (96 aa)) is disordered. Residues 195–211 (SVNGSNSNSSSSSRVRS) show a composition bias toward low complexity. Residues 212–221 (ATISSHNNSP) are compositionally biased toward polar residues. Over residues 227–244 (NNNNNNNNNSNNSNNSNN) the composition is skewed to low complexity. 3 Kelch repeats span residues 335-384 (KAFI…AIGS), 386-441 (LFIF…PISS), and 443-496 (ILII…PITS). Disordered stretches follow at residues 510–569 (LPHL…DNIN), 609–631 (QSID…VSND), and 647–671 (NKNN…NSGS). Residues 615-626 (GGSGGGSGGGNG) are compositionally biased toward gly residues. The stretch at 690 to 729 (CIKKYNSLKDSYLELKQKYQEEREKRLELEKELERYRLSS) forms a coiled coil. Positions 748–786 (NINSNNSTTTTTTTTTTTTTPIPLSTSNNNNNNNNNSTL) are disordered. Positions 812–840 (YEKRVKWKENTEKEANQQLEVIKSKIDLF) form a coiled coil. Disordered stretches follow at residues 861-881 (SENI…QNPQ), 905-927 (LTPR…PIPL), 963-991 (TPQK…SKST), 1006-1096 (SGHF…RLGK), and 1143-1194 (NGAN…SERI). Residues 870–881 (QQQQQQQQQNPQ) are compositionally biased toward low complexity. Residues 905-915 (LTPRKSRENSV) are compositionally biased toward basic and acidic residues. 4 stretches are compositionally biased toward low complexity: residues 971–981 (PQQQQQQQPPQ), 1012–1030 (SSSN…FSNN), 1043–1079 (QHQQ…LQTQ), and 1143–1153 (NGANNLGGLVL). Residues 1151–1228 (LVLTSDKEKE…KKHKKIKGLF (78 aa)) adopt a coiled-coil conformation. Basic and acidic residues predominate over residues 1155 to 1194 (SDKEKEKLEKEREKSERIEREKQEKEREKLEKEREKSERI). The Rho-GAP domain occupies 1233 to 1411 (SNKESLPFRR…TFIEDFHYIF (179 aa)). The segment at 1425-1482 (DDDYDSSSFGSNNTPSSHSPHSSSPTLNPAVTTTTTTTTTTNTTTTTNTTTTPTSATI) is disordered. Residues 1430 to 1476 (SSSFGSNNTPSSHSPHSSSPTLNPAVTTTTTTTTTTNTTTTTNTTTT) are compositionally biased toward low complexity.

The protein resides in the cytoplasm. Its function is as follows. Rho GTPase-activating protein involved in the signal transduction pathway. This Dictyostelium discoideum (Social amoeba) protein is Rho GTPase-activating protein gacHH (gacHH).